The chain runs to 185 residues: ATP synthase subunit delta (185 aa).

The protein belongs to the ATPase delta chain family. F-type ATPases have 2 components, F(1) - the catalytic core - and F(0) - the membrane proton channel. F(1) has five subunits: alpha(3), beta(3), gamma(1), delta(1), epsilon(1). CF(0) has four main subunits: a(1), b(1), b'(1) and c(10-14). The alpha and beta chains form an alternating ring which encloses part of the gamma chain. F(1) is attached to F(0) by a central stalk formed by the gamma and epsilon chains, while a peripheral stalk is formed by the delta, b and b' chains.

The protein resides in the cellular thylakoid membrane. F(1)F(0) ATP synthase produces ATP from ADP in the presence of a proton or sodium gradient. F-type ATPases consist of two structural domains, F(1) containing the extramembraneous catalytic core and F(0) containing the membrane proton channel, linked together by a central stalk and a peripheral stalk. During catalysis, ATP synthesis in the catalytic domain of F(1) is coupled via a rotary mechanism of the central stalk subunits to proton translocation. Its function is as follows. This protein is part of the stalk that links CF(0) to CF(1). It either transmits conformational changes from CF(0) to CF(1) or is implicated in proton conduction. The polypeptide is ATP synthase subunit delta (Picosynechococcus sp. (strain ATCC 27264 / PCC 7002 / PR-6) (Agmenellum quadruplicatum)).